The sequence spans 108 residues: uncharacterized protein (108 aa).

The next 3 membrane-spanning stretches (helical) occupy residues 4–24, 46–66, and 81–101; these read IIFLFRAIWLALSLLILFFSM, GMMVICFPTGIVFFIALIFIG, and IMAIIIWLYFLSGGYIQWFVL.

Its subcellular location is the cell membrane. This is an uncharacterized protein from Escherichia coli O157:H7.